We begin with the raw amino-acid sequence, 206 residues long: Large ribosomal subunit protein uL4 (206 aa).

The tract at residues Thr-47 to Ala-77 is disordered.

Belongs to the universal ribosomal protein uL4 family. As to quaternary structure, part of the 50S ribosomal subunit.

In terms of biological role, one of the primary rRNA binding proteins, this protein initially binds near the 5'-end of the 23S rRNA. It is important during the early stages of 50S assembly. It makes multiple contacts with different domains of the 23S rRNA in the assembled 50S subunit and ribosome. Its function is as follows. Forms part of the polypeptide exit tunnel. This Nitrosomonas europaea (strain ATCC 19718 / CIP 103999 / KCTC 2705 / NBRC 14298) protein is Large ribosomal subunit protein uL4.